Here is a 277-residue protein sequence, read N- to C-terminus: MALQGNVAILTRLQDTASAVQQFKQTNPQVADVTVLAVAEDSDVTQTVTSSSASAKENAFDGIVSFSEQTEELGIELGAVLPLLKTGGVLQLHVANVKEEKKNAILMALMIGGLVDTSDKQESSPFYPEFSDAVSFTSKKQSFESAAIPLAVKSTTTQPIKKWTVLADDFGDDQDDDIIDEDTLLDDTDEVLQAAKADCGDAVGGKKRACKNCTCGLKDENDKPVMSEKDLNSLVSGCGNCFKGDAFRCGSCPFLGKPAFKPGMEKVLLNLDSSDDI.

Residues 1–134 (MALQGNVAIL…PFYPEFSDAV (134 aa)) are N-terminal SAM-like domain. The linker stretch occupies residues 135–191 (SFTSKKQSFESAAIPLAVKSTTTQPIKKWTVLADDFGDDQDDDIIDEDTLLDDTDEV). [2Fe-2S] cluster-binding residues include cysteine 199, cysteine 210, cysteine 213, and cysteine 215. The segment at 199–215 (CGDAVGGKKRACKNCTC) is fe-S binding site A. The [4Fe-4S] cluster site is built by cysteine 238, cysteine 241, cysteine 249, and cysteine 252. 2 consecutive short sequence motifs (cx2C motif) follow at residues 238 to 241 (CGNC) and 249 to 252 (CGSC). The interval 238–252 (CGNCFKGDAFRCGSC) is fe-S binding site B.

The protein belongs to the anamorsin family. As to quaternary structure, monomer. Requires [2Fe-2S] cluster as cofactor. The cofactor is [4Fe-4S] cluster.

Its subcellular location is the cytoplasm. It localises to the mitochondrion intermembrane space. Functionally, component of the cytosolic iron-sulfur (Fe-S) protein assembly (CIA) machinery. Required for the maturation of extramitochondrial Fe-S proteins. Part of an electron transfer chain functioning in an early step of cytosolic Fe-S biogenesis, facilitating the de novo assembly of a [4Fe-4S] cluster on the cytosolic Fe-S scaffold complex. Electrons are transferred from NADPH via a FAD- and FMN-containing diflavin oxidoreductase. Together with the diflavin oxidoreductase, also required for the assembly of the diferric tyrosyl radical cofactor of ribonucleotide reductase (RNR), probably by providing electrons for reduction during radical cofactor maturation in the catalytic small subunit. This Phytophthora infestans (strain T30-4) (Potato late blight agent) protein is Anamorsin homolog.